Reading from the N-terminus, the 281-residue chain is Pantothenate synthetase (281 aa).

An ATP-binding site is contributed by 30-37 (MGNLHQGH). His37 (proton donor) is an active-site residue. (R)-pantoate is bound at residue Gln61. Gln61 serves as a coordination point for beta-alanine. An ATP-binding site is contributed by 149 to 152 (GNKD). A (R)-pantoate-binding site is contributed by Gln155. ATP contacts are provided by residues Ile178 and 186–189 (MSSR).

It belongs to the pantothenate synthetase family. As to quaternary structure, homodimer.

It is found in the cytoplasm. The catalysed reaction is (R)-pantoate + beta-alanine + ATP = (R)-pantothenate + AMP + diphosphate + H(+). It functions in the pathway cofactor biosynthesis; (R)-pantothenate biosynthesis; (R)-pantothenate from (R)-pantoate and beta-alanine: step 1/1. Catalyzes the condensation of pantoate with beta-alanine in an ATP-dependent reaction via a pantoyl-adenylate intermediate. This is Pantothenate synthetase from Shewanella baltica (strain OS155 / ATCC BAA-1091).